Here is a 55-residue protein sequence, read N- to C-terminus: Potassium channel toxin alpha-KTx 17.1 (55 aa).

The N-terminal stretch at Met-1–Ala-23 is a signal peptide. Position 24 is a pyrrolidone carboxylic acid (Gln-24). Cystine bridges form between Cys-27–Cys-43, Cys-33–Cys-48, and Cys-37–Cys-50. The residue at position 53 (Thr-53) is a Threonine amide.

Belongs to the short scorpion toxin superfamily. Potassium channel inhibitor family. Alpha-KTx 17 subfamily. In terms of tissue distribution, expressed by the venom gland.

The protein resides in the secreted. Its function is as follows. Blocker of potassium channels, which inhibits both the delayed rectifier and fast transient potassium current. The inhibition is reversible and voltage-independent. It causes a depolarizing shift of the steady-state activation curve of the currents, without changing their steady-state inactivation behavior. The protein is Potassium channel toxin alpha-KTx 17.1 of Olivierus martensii (Manchurian scorpion).